The following is a 182-amino-acid chain: Ribulose bisphosphate carboxylase small subunit, chloroplastic 4 (182 aa).

The transit peptide at 1 to 41 (MSAAMMNKSVVLSKQCTKPAATPKVVTSKRSFASTVANKNR) directs the protein to the chloroplast.

The protein belongs to the RuBisCO small chain family. As to quaternary structure, heterohexadecamer of 8 large and 8 small subunits.

It localises to the plastid. It is found in the chloroplast. Functionally, ruBisCO catalyzes two reactions: the carboxylation of D-ribulose 1,5-bisphosphate, the primary event in carbon dioxide fixation, as well as the oxidative fragmentation of the pentose substrate. Both reactions occur simultaneously and in competition at the same active site. Although the small subunit is not catalytic it is essential for maximal activity. This Acetabularia acetabulum (Mermaid's wine glass) protein is Ribulose bisphosphate carboxylase small subunit, chloroplastic 4.